The following is a 312-amino-acid chain: Transcription initiation factor IIB (312 aa).

A TFIIB-type zinc finger spans residues 10–42; it reads FVQTCSDCGETQNIVEDYKNGYHVCGRCGCIVG. Cys14, Cys17, Cys34, and Cys37 together coordinate Zn(2+). 2 repeat units span residues 120–196 and 213–290.

Belongs to the TFIIB family. Associates with TFIID-IIA (DA complex) to form TFIID-IIA-IIB (DAB-complex) which is then recognized by polymerase II.

Its subcellular location is the nucleus. Functionally, general factor that plays a major role in the activation of eukaryotic genes transcribed by RNA polymerase II. This chain is Transcription initiation factor IIB, found in Encephalitozoon cuniculi (strain GB-M1) (Microsporidian parasite).